A 132-amino-acid chain; its full sequence is MRHGVSYRKFSRPTAHRMAMMMNLAVSLVTSERIVTTLPKAKDLRSVVEGLITIAKRYSQKDPVCGRRLLLSRTSGNSSVTNKLLGVLAQRYKNRNGGYTRIMKNGFRKGDCAPIAIIELVDREKDLKVIGS.

It belongs to the bacterial ribosomal protein bL17 family. Part of the 50S ribosomal subunit. Contacts protein L32.

This Anaplasma phagocytophilum (strain HZ) protein is Large ribosomal subunit protein bL17.